Consider the following 513-residue polypeptide: Xyloglucan 6-xylosyltransferase 4 (513 aa).

At 1-39 the chain is on the cytoplasmic side; sequence MFQDGSRSSGSGRGLSTTAVSNGGWRTRGFLRGWQIQNT. Residues 40-60 traverse the membrane as a helical; Signal-anchor for type II membrane protein segment; it reads LFNNIKFMILCCFVTILILLG. Residues 61–513 lie on the Lumenal side of the membrane; it reads TIRVGNLGSS…IRRMHMETKP (453 aa). Asparagine 76, asparagine 110, asparagine 142, asparagine 174, and asparagine 490 each carry an N-linked (GlcNAc...) asparagine glycan.

This sequence belongs to the glycosyltransferase 34 family.

It is found in the golgi apparatus membrane. It catalyses the reaction Transfers an alpha-D-xylosyl residue from UDP-D-xylose to a glucose residue in xyloglucan, forming an alpha-(1-&gt;6)-D-xylosyl-D-glucose linkage.. Xylosyltransferase specific to UDP-D-xylose that accepts cellohexaose as substrate to produce xyloglucan. The sequence is that of Xyloglucan 6-xylosyltransferase 4 from Arabidopsis thaliana (Mouse-ear cress).